Consider the following 942-residue polypeptide: Exopolysaccharide phosphotransferase SCO2592 (942 aa).

This sequence belongs to the stealth family.

This chain is Exopolysaccharide phosphotransferase SCO2592, found in Streptomyces coelicolor (strain ATCC BAA-471 / A3(2) / M145).